Consider the following 646-residue polypeptide: MADDSGTEDVGSGCSGWFLVEAVVDKQTGDVVSEDEDEDAIEDSGYDMVDFINDTVVSEHEELSNAQALLHAQQTCADAVELCELKRKYISPYVSPIQCSEPSVDGDLSPRLHAIKLGGGKKAKRRLFERLEQRDSGYGYSQVETTETQVEEEHGEPEGIEGGSGRAATVETEAVEVLEESSDVIQQLSPRTQVVELFKCKDLNAKLCGKFKELFGVGFHDLVRQFKSDKSTCTDWVYAVFGVNPTIAEGFHTLLKGQALYLHTQWTTCRWGMVLLALCRYKVAKNRETVVRQLAKMLNVPDNQLMVQPPKLQSSAAALFWFRSGMGNGSEVSGTTPEWIAKQTMLEHSFAEAQFSLTQMVQWAYDNGHTDECEIAYYYAQIADIDANAAAFLKSNNQAKYVRDCAAMCKHYRLAEMRRMSMADWIKHRGEKCDEGDWKPIVKLLRYQHIDIIVFLAALKKWLHGIPKKNCICIVGPPDTGKSCFGMSLMHFLQGTIISFVNSCSHFWLQSLVDAKVAMLDDVTSACWAYMDTHMRNLLDGNPTSIDRKHKSLAVIKCPPLLLTSNINIKHDCKYQYLQSRVTVFEFPNPFPFDSNGNAVYELSDANWNSFFKRLASSLELQTTEDEDGETSQAPRFVPGTVVRTL.

Residues lysine 86–lysine 88 carry the Nuclear localization signal motif. 3 positions are modified to phosphoserine; by host: serine 91, serine 95, and serine 109. Positions leucine 108 to leucine 117 match the Nuclear export signal motif. Positions tyrosine 138–arginine 166 are disordered. Acidic residues predominate over residues glutamine 149–glycine 159. The interval glutamine 186–glutamate 352 is DNA-binding region. Positions isoleucine 450–valine 600 constitute an SF3 helicase domain. Glycine 476–serine 483 contacts ATP. Residue lysine 557 forms a Glycyl lysine isopeptide (Lys-Gly) (interchain with G-Cter in SUMO) linkage.

This sequence belongs to the papillomaviridae E1 protein family. Can form hexamers. Interacts with E2 protein; this interaction increases E1 DNA binding specificity. Interacts with host DNA polymerase subunit POLA2. Interacts with host single stranded DNA-binding protein RPA1. Interacts with host TOP1; this interaction stimulates the enzymatic activity of TOP1. In terms of processing, phosphorylated. Post-translationally, sumoylated.

The protein localises to the host nucleus. It carries out the reaction Couples ATP hydrolysis with the unwinding of duplex DNA by translocating in the 3'-5' direction.. It catalyses the reaction ATP + H2O = ADP + phosphate + H(+). Functionally, ATP-dependent DNA 3'-5' helicase required for initiation of viral DNA replication. It forms a complex with the viral E2 protein. The E1-E2 complex binds to the replication origin which contains binding sites for both proteins. During the initial step, a dimer of E1 interacts with a dimer of protein E2 leading to a complex that binds the viral origin of replication with high specificity. Then, a second dimer of E1 displaces the E2 dimer in an ATP-dependent manner to form the E1 tetramer. Following this, two E1 monomers are added to each half of the site, which results in the formation of two E1 trimers on the viral ori. Subsequently, two hexamers will be created. The double hexamer acts as a bi-directional helicase machinery and unwinds the viral DNA and then recruits the host DNA polymerase to start replication. The protein is Replication protein E1 of Homo sapiens (Human).